Reading from the N-terminus, the 285-residue chain is DegV domain-containing protein CA_C3284 (285 aa).

One can recognise a DegV domain in the interval 3–280; sequence VKILTDSTSC…PGAIGIAYYT (278 aa). 2 residues coordinate hexadecanoate: Ser-59 and Ser-91.

In terms of biological role, may bind long-chain fatty acids, such as palmitate, and may play a role in lipid transport or fatty acid metabolism. This chain is DegV domain-containing protein CA_C3284, found in Clostridium acetobutylicum (strain ATCC 824 / DSM 792 / JCM 1419 / IAM 19013 / LMG 5710 / NBRC 13948 / NRRL B-527 / VKM B-1787 / 2291 / W).